The primary structure comprises 718 residues: MQEFDKSISFDGRDIRLKLGLLAPQAGGSVLIQSGDTAVLVTATRATGREGIDFLPLTVDYEERLYAAGRIPGGFLRREGRPPEKAILISRLIDRPLRPLFPQWLRDDIQIIATTLSMDEEVPPDVLAVTGASIAVIAARIPFFGPMAAVRVGLIGDDFIINPTYREIEIGDLDLVVAGSPDGVVMVEAGANQLPEQDIIEAIDFGYEAVRDLIQAQRDVMEALDIPLVIGEPPAVNEVLQSFISDRASESIKKVLMQYNLDKNARDEQLDEIKETAITNAIAELPEEDPVKVAATEEPKAVSNLYKDLTKKLMRSQIITDGVRVDGRKLDEVRPISSRVCLLPRRVHGSALFARGLTQVLSLATLGTPGDAQDLADDLHPEDEKRYLHHYNFPPFSVGETKPLRSPGRREIGHGALAERAITPILPPQEEFPYVIRVVSEVLSSNGSTSMGSVCGSTLALMDAGVPITKPVSGAAMGLIKEGDEVRILTDIQGIEDFLGDMDFKVAGTDSGITALQMDMKITGLSMEIVAKAIEQALPARLHILDKMMETLSTPRKNLSPYAPRLLTMKIDPEQIGLVIGPGGKTIKGITEQTGSKIDIADDGTVTIAALEAEKAEKAKQIIYNMTRKLNEGEVYMGRVTRIIQIGAFVEVLPGKEGMIHISQLAEGRVGKVEDEVAVGDEVIVKVREIDAKGRLNLTRLGIHPDEAAAARKAVAPV.

Mg(2+)-binding residues include aspartate 497 and aspartate 503. The 60-residue stretch at 564–623 (PRLLTMKIDPEQIGLVIGPGGKTIKGITEQTGSKIDIADDGTVTIAALEAEKAEKAKQII) folds into the KH domain. The S1 motif domain occupies 633-701 (GEVYMGRVTR…AKGRLNLTRL (69 aa)).

This sequence belongs to the polyribonucleotide nucleotidyltransferase family. Mg(2+) serves as cofactor.

The protein resides in the cytoplasm. It carries out the reaction RNA(n+1) + phosphate = RNA(n) + a ribonucleoside 5'-diphosphate. Its function is as follows. Involved in mRNA degradation. Catalyzes the phosphorolysis of single-stranded polyribonucleotides processively in the 3'- to 5'-direction. In Rippkaea orientalis (strain PCC 8801 / RF-1) (Cyanothece sp. (strain PCC 8801)), this protein is Polyribonucleotide nucleotidyltransferase.